We begin with the raw amino-acid sequence, 229 residues long: Apoptosis regulator Bcl-2 (229 aa).

Residues 10 to 30 (DNREIVMKYIHYKLSQRGYEW) carry the BH4 motif. The disordered stretch occupies residues 30–82 (WDAGDAGAAPPGAAPAPGILSSQPGRTPAPSRTSPPPPPAAAAGPAPSPVPPV). A compositionally biased stretch (low complexity) spans 33–61 (GDAGAAPPGAAPAPGILSSQPGRTPAPSR). Thr-62 bears the Phosphothreonine; by MAPK8 mark. Residues 62–81 (TSPPPPPAAAAGPAPSPVPP) show a composition bias toward pro residues. Ser-63 carries the post-translational modification Phosphoserine; by MAPK8 and PKC. Ser-77 is subject to Phosphoserine; by MAPK8. The BH3 motif lies at 83-97 (VHLTLRQAGDDFSRR). Positions 126-145 (ELFRDGVNWGRIVAFFEFGG) match the BH1 motif. Residues 177–192 (TWIQDNGGWDAFVELY) carry the BH2 motif. A helical membrane pass occupies residues 202–223 (FSWLSLKALLSLALVGACITLG).

The protein belongs to the Bcl-2 family. In terms of assembly, forms homodimers, and heterodimers with BAX, BAD, BAK and Bcl-X(L). Heterodimerization with BAX requires intact BH1 and BH2 motifs, and is necessary for anti-apoptotic activity. Component of the complex, at least composed of LRPPRC, BECN1 and BCL2; the interactions prevent BECN1 from forming an autophagy-inducing complex with PIK3C3. Interacts with EI24. Also interacts with APAF1, BBC3, BCL2L1, BNIPL, MRPL41 and TP53BP2. Binding to FKBP8 seems to target BCL2 to the mitochondria and probably interferes with the binding of BCL2 to its targets. Interacts with BAG1 in an ATP-dependent manner. Interacts with RAF1 (the 'Ser-338' and 'Ser-339' phosphorylated form). Interacts (via the BH4 domain) with EGLN3; the interaction prevents the formation of the BAX-BCL2 complex and inhibits the anti-apoptotic activity of BCL2. Interacts with G0S2; this interaction also prevents the formation of the anti-apoptotic BAX-BCL2 complex. Interacts with RTL10/BOP. Interacts with the SCF(FBXO10) complex. Interacts (via the loop between motifs BH4 and BH3) with NLRP1 (via LRR repeats), but not with NLRP2, NLRP3, NLRP4, PYCARD, nor MEFV. Interacts with GIMAP3/IAN4, GIMAP4/IAN1 and GIMAP5/IAN5. Interacts with BCAP31. Interacts with IRF3; the interaction is inhibited by Sendai virus infection. Interacts with BECN1; thereby inhibiting autophagy in non-starvation conditions. Interacts with AMBRA1; thereby inhibiting autophagy. Post-translationally, phosphorylation/dephosphorylation on Ser-63 regulates anti-apoptotic activity. Growth factor-stimulated phosphorylation on Ser-63 by PKC is required for the anti-apoptosis activity and occurs during the G2/M phase of the cell cycle. In the absence of growth factors, BCL2 appears to be phosphorylated by other protein kinases such as ERKs and stress-activated kinases. Phosphorylated by MAPK8/JNK1 at Thr-62, Ser-63 and Ser-77, which stimulates starvation-induced autophagy. Dephosphorylated by protein phosphatase 2A (PP2A). Proteolytically cleaved by caspases during apoptosis. The cleaved protein, lacking the BH4 motif, has pro-apoptotic activity, causes the release of cytochrome c into the cytosol promoting further caspase activity. In terms of processing, monoubiquitinated by PRKN, leading to an increase in its stability. Ubiquitinated by SCF(FBXO10), leading to its degradation by the proteasome.

It is found in the mitochondrion outer membrane. The protein resides in the nucleus membrane. It localises to the endoplasmic reticulum membrane. The protein localises to the cytoplasm. In terms of biological role, suppresses apoptosis in a variety of cell systems including factor-dependent lymphohematopoietic and neural cells. Regulates cell death by controlling the mitochondrial membrane permeability. Appears to function in a feedback loop system with caspases. Inhibits caspase activity either by preventing the release of cytochrome c from the mitochondria and/or by binding to the apoptosis-activating factor (APAF-1). Also acts as an inhibitor of autophagy: interacts with BECN1 and AMBRA1 during non-starvation conditions and inhibits their autophagy function. May attenuate inflammation by impairing NLRP1-inflammasome activation, hence CASP1 activation and IL1B release. This chain is Apoptosis regulator Bcl-2 (BCL2), found in Bos taurus (Bovine).